The following is a 470-amino-acid chain: Light-independent protochlorophyllide reductase subunit N (470 aa).

Cysteine 22, cysteine 47, and cysteine 107 together coordinate [4Fe-4S] cluster.

This sequence belongs to the BchN/ChlN family. As to quaternary structure, protochlorophyllide reductase is composed of three subunits; ChlL, ChlN and ChlB. Forms a heterotetramer of two ChlB and two ChlN subunits. [4Fe-4S] cluster serves as cofactor.

It is found in the plastid. The protein resides in the chloroplast. The enzyme catalyses chlorophyllide a + oxidized 2[4Fe-4S]-[ferredoxin] + 2 ADP + 2 phosphate = protochlorophyllide a + reduced 2[4Fe-4S]-[ferredoxin] + 2 ATP + 2 H2O. It functions in the pathway porphyrin-containing compound metabolism; chlorophyll biosynthesis (light-independent). Component of the dark-operative protochlorophyllide reductase (DPOR) that uses Mg-ATP and reduced ferredoxin to reduce ring D of protochlorophyllide (Pchlide) to form chlorophyllide a (Chlide). This reaction is light-independent. The NB-protein (ChlN-ChlB) is the catalytic component of the complex. This Pinus koraiensis (Korean pine) protein is Light-independent protochlorophyllide reductase subunit N.